Reading from the N-terminus, the 247-residue chain is Large ribosomal subunit protein uL24m (247 aa).

Residues 84–117 (FFRGDRIEVLVGKDKGKQGIVTQVIPERNWVIVE) form the KOW domain.

It belongs to the universal ribosomal protein uL24 family. As to quaternary structure, component of the mitochondrial ribosome large subunit (39S) which comprises a 16S rRNA and about 50 distinct proteins.

Its subcellular location is the mitochondrion. The chain is Large ribosomal subunit protein uL24m (mRpL24) from Drosophila melanogaster (Fruit fly).